Reading from the N-terminus, the 141-residue chain is Hemoglobin subunit beta-C (141 aa).

Residues 1-141 (PNKALITGFW…VASALAHRYH (141 aa)) form the Globin domain. Heme b contacts are provided by His58 and His87.

It belongs to the globin family. In terms of assembly, heterotetramer of two alpha chains and two beta chains. In terms of tissue distribution, red blood cells.

In terms of biological role, involved in oxygen transport from the lung to the various peripheral tissues. The chain is Hemoglobin subunit beta-C from Ammotragus lervia (Barbary sheep).